The chain runs to 198 residues: Imidazoleglycerol-phosphate dehydratase (198 aa).

It belongs to the imidazoleglycerol-phosphate dehydratase family.

The protein localises to the cytoplasm. The catalysed reaction is D-erythro-1-(imidazol-4-yl)glycerol 3-phosphate = 3-(imidazol-4-yl)-2-oxopropyl phosphate + H2O. It functions in the pathway amino-acid biosynthesis; L-histidine biosynthesis; L-histidine from 5-phospho-alpha-D-ribose 1-diphosphate: step 6/9. This chain is Imidazoleglycerol-phosphate dehydratase, found in Streptomyces griseus subsp. griseus (strain JCM 4626 / CBS 651.72 / NBRC 13350 / KCC S-0626 / ISP 5235).